Reading from the N-terminus, the 848-residue chain is MNGNFAAVGSEPTDAQFEHGIQVIDEDKQYNGLVNDYLRRTHVAEAGFNYHLISVFGSQSTGKSTLLNNLFGTEFSVMSESERRQTTKGIWMSKNKREGKMAENILVMDVEGTDGRERGEDQDFERKSALFALATSEVLIVNIWEHQVGLYQGANMGLLKTVFEVNLQLFLKDKQSSPRSLLFFVIRDHIGNTPLSNLRNTLVQDLTKIWSSISKPPALENAKIEDYFDFAFAALPHKILQPEKFVTEVENLGTRFVAGHRSTQDQEFVGGVFLPEYHRRIPADGFSIYAEGIWDQIVNNKDLDLPTQQELLAQFRCDEISRDVLNAFDEAITPLEDKQAEASRLGKPFVLPDLGDTARSARSKAVEAFKVQASRYHKGVYTRKQAELEGKMDSRLKALYQGQLAAAHKAGVAAFSDAVTGAVKAGQKSGGSYEFAEIVDKQKRKTLDIFAKEAQGLEIEGLAWTNFKPQFLLFEKELDEVSARLRKDEMRRLATRVERWVKSRLGDSIGLEFNKLGSGRGGSGAPETGEKPATEKDLWDRIWTVFVAVVKEAQERFAERAKSFEASSEEVEIGLWRLRRKSWVALRERIDEEVMEGNILLKLRENFEDKFRYDEAGVPRIWRPTDDIEGIYTRARESTLTLIPLLSRFRLAETYASPDLPGWIGNQPPGVEPDDEEDLTPIGGIDEEEGKSLEEEMTVLSESKRQDLVVRFKKTADGVYVEAKRGALGGMTQVPLYFWIALFAFGWNEIWMVIRNPFLFILLLLSAGGTYVAYNLSLLGPMMQMTNAAANQASEIGKQKLREFLENNETARQALAMPASSKSSGGEQVRMDTLDSKGKKKDYDDDGI.

Residues Met1–Gln733 lie on the Cytoplasmic side of the membrane. In terms of domain architecture, GB1/RHD3-type G spans Gly47–Tyr277. GTP is bound at residue Gly57–Ser64. Residues Val734–Ile754 traverse the membrane as a helical segment. Residues Arg755–Pro757 lie on the Lumenal side of the membrane. The chain crosses the membrane as a helical span at residues Phe758–Leu778. Topologically, residues Leu779 to Ile848 are cytoplasmic. Positions Leu815–Ile848 are disordered. The span at Val829 to Ile848 shows a compositional bias: basic and acidic residues.

The protein belongs to the TRAFAC class dynamin-like GTPase superfamily. GB1/RHD3 GTPase family. RHD3 subfamily.

It is found in the endoplasmic reticulum membrane. In terms of biological role, cooperates with the reticulon proteins and tubule-shaping DP1 family proteins to generate and maintain the structure of the tubular endoplasmic reticulum network. Has GTPase activity, which is required for its function in ER organization. The polypeptide is Protein SEY1 (Pyricularia oryzae (strain 70-15 / ATCC MYA-4617 / FGSC 8958) (Rice blast fungus)).